Consider the following 553-residue polypeptide: Serine/threonine-protein kinase WNG2 (553 aa).

2 disordered regions span residues 1 to 20 (MMFP…RLQR) and 88 to 107 (NREP…GGAE). The first 64 residues, 1–64 (MMFPAVAAPP…GLSWVSVAVA (64 aa)), serve as a signal peptide directing secretion. The Protein kinase domain maps to 125–395 (FKQLRPVDEF…IGEVMEDPFF (271 aa)). K186 contacts ATP. D278 serves as the catalytic Proton acceptor. The segment at 432–553 (REKADAAAKA…GFNKEDAQES (122 aa)) is disordered. Residues 438–451 (AAKAADNAEVPAAK) are compositionally biased toward low complexity. Composition is skewed to basic and acidic residues over residues 465-486 (GDRD…EKGR), 494-524 (EGNH…ENRE), and 531-553 (QREE…AQES).

Belongs to the protein kinase superfamily. STE Ser/Thr protein kinase family. WNG subfamily. Mg(2+) serves as cofactor.

The protein resides in the cytoplasmic granule. The protein localises to the secreted. Its subcellular location is the parasitophorous vacuole lumen. The enzyme catalyses L-seryl-[protein] + ATP = O-phospho-L-seryl-[protein] + ADP + H(+). The catalysed reaction is L-threonyl-[protein] + ATP = O-phospho-L-threonyl-[protein] + ADP + H(+). Its function is as follows. Probable serine/threonine-protein kinase. This Toxoplasma gondii protein is Serine/threonine-protein kinase WNG2.